An 859-amino-acid polypeptide reads, in one-letter code: Heat shock protein 105 kDa (859 aa).

S2 carries the N-acetylserine modification. K471 is modified (N6-acetyllysine). A phosphoserine mark is found at S509 and S510. 2 disordered regions span residues 515–585 (MDCQ…PPEA) and 797–859 (CEPV…MDLD). Polar residues predominate over residues 533-555 (QQDNNEAGTQPQVQTDGHQTSQS). Position 558 is a phosphoserine (S558). At T562 the chain carries Phosphothreonine. Composition is skewed to basic and acidic residues over residues 564-585 (EENK…PPEA) and 806-815 (PKIESPKLER). S810 carries the phosphoserine modification. T816 is modified (phosphothreonine). A compositionally biased stretch (basic and acidic residues) spans 822–831 (TDKKEEDLDG). Over residues 850–859 (EKSSINMDLD) the composition is skewed to polar residues.

It belongs to the heat shock protein 70 family. As to quaternary structure, interacts with HSPA8/HSC70. Interacts with HSPA1A (via NBD) and HSPA1B (via NBD). Phosphorylation on Ser-509 may be important for regulation of the HSPA8/HSC70 chaperone activity.

The protein resides in the cytoplasm. Functionally, acts as a nucleotide-exchange factor (NEF) for chaperone proteins HSPA1A and HSPA1B, promoting the release of ADP from HSPA1A/B thereby triggering substrate release. Prevents the aggregation of denatured proteins in cells under severe stress, on which the ATP levels decrease markedly. Inhibits HSPA8/HSC70 ATPase and chaperone activities. The polypeptide is Heat shock protein 105 kDa (HSPH1) (Bos taurus (Bovine)).